The primary structure comprises 241 residues: Probable transcriptional regulatory protein Reut_A2522 (241 aa).

It belongs to the TACO1 family.

It is found in the cytoplasm. The polypeptide is Probable transcriptional regulatory protein Reut_A2522 (Cupriavidus pinatubonensis (strain JMP 134 / LMG 1197) (Cupriavidus necator (strain JMP 134))).